The chain runs to 2788 residues: Multiple epidermal growth factor-like domains protein 8 (2788 aa).

The N-terminal stretch at 1–27 (MALGGALAAALALAFAVLGPLSHKVLA) is a signal peptide. At 28-2590 (GDCKGQRQVL…FFRQDQAHID (2563 aa)) the chain is on the extracellular side. Disulfide bonds link Cys-30–Cys-57, Cys-142–Cys-152, Cys-146–Cys-158, Cys-174–Cys-184, Cys-178–Cys-191, and Cys-193–Cys-202. The CUB 1 domain maps to 30–140 (CKGQRQVLRE…LGFNASFRFS (111 aa)). Asn-50 carries an N-linked (GlcNAc...) asparagine glycan. 2 EGF-like domains span residues 138-168 (RFSL…GGPD) and 170-203 (GLQE…RACD). Kelch repeat units lie at residues 241–287 (LLAV…AVAW), 290–338 (FLVL…AGHA), 346–399 (WLYV…FHAP), 402–453 (TLLV…FHTA), 459–511 (YMVV…APPS), and 525–575 (VLLV…SRDP). PSI domains follow at residues 561–613 (YCSM…SDCQ), 847–899 (ACSS…ALCP), and 900–947 (LCEE…EECP). Residue Asn-1048 is glycosylated (N-linked (GlcNAc...) asparagine). The EGF-like 3; calcium-binding domain maps to 1074-1115 (DVDECRLGLARCHPRATCLNTPLSYECHCQRGYQGDGITHCN). 16 disulfides stabilise this stretch: Cys-1078/Cys-1091, Cys-1085/Cys-1100, Cys-1102/Cys-1114, Cys-1163/Cys-1171, Cys-1165/Cys-1179, Cys-1182/Cys-1191, Cys-1194/Cys-1208, Cys-1211/Cys-1224, Cys-1213/Cys-1231, Cys-1233/Cys-1242, Cys-1245/Cys-1259, Cys-1263/Cys-1302, Cys-1336/Cys-1367, Cys-1407/Cys-1421, Cys-1415/Cys-1433, and Cys-1435/Cys-1444. Laminin EGF-like domains lie at 1163–1210 (CGCN…GCRP) and 1211–1261 (CQCN…SCFR). Residues 1263–1405 (CGGRALLTNV…WGFNASVGSA (143 aa)) form the CUB 2 domain. An N-linked (GlcNAc...) asparagine glycan is attached at Asn-1271. A Phosphothreonine modification is found at Thr-1353. The region spanning 1403–1445 (GSARCGSGGPGSCPVPQECVPQDGAAGAGLCRCPQGWAGPHCR) is the EGF-like 4 domain. 6 Kelch repeats span residues 1522 to 1570 (TLWM…SFHA), 1580 to 1626 (AMYL…HTLT), 1632 to 1678 (SLLL…SAVY), 1684 to 1734 (SLYV…HASA), 1739 to 1786 (TMVV…ESVA), and 1795 to 1840 (RLYI…WCHG). 4 PSI domains span residues 1819–1859 (PCRL…PPCS), 1867–1922 (ECRR…NDCR), 2003–2061 (PCHL…ESCS), and 2063–2120 (GCAQ…LSCP). A glycan (N-linked (GlcNAc...) asparagine) is linked at Asn-2009. Positions 2121-2159 (PEDECANGHHDCNETQNCHDQPHGYECSCKTGYTMDNVT) constitute an EGF-like 5 domain. Disulfide bonds link Cys-2125/Cys-2138 and Cys-2132/Cys-2147. 2 N-linked (GlcNAc...) asparagine glycosylation sites follow: Asn-2157 and Asn-2172. Cystine bridges form between Cys-2196–Cys-2204, Cys-2198–Cys-2213, Cys-2216–Cys-2225, and Cys-2228–Cys-2242. Laminin EGF-like domains follow at residues 2196–2244 (CRCN…TCRP) and 2323–2386 (CQCN…QCYR). A disordered region spans residues 2465 to 2507 (HTVHIQPPPPPPPPPPPADGVPRVASDLGGLGTGSGSGSPVEP). The segment covering 2470 to 2483 (QPPPPPPPPPPPAD) has biased composition (pro residues). Residues 2591–2611 (LFVFFSVFFSCFFLFLSLCVL) form a helical membrane-spanning segment. Topologically, residues 2612-2788 (LWKAKQALDQ…SQDNLTSMSL (177 aa)) are cytoplasmic. Residues 2761–2775 (GGAGGSGHGGGGGRK) show a composition bias toward gly residues. The disordered stretch occupies residues 2761–2788 (GGAGGSGHGGGGGRKGLLSQDNLTSMSL). The segment covering 2779–2788 (SQDNLTSMSL) has biased composition (polar residues).

As to expression, expressed in brain.

It is found in the membrane. Functionally, acts as a negative regulator of hedgehog signaling. The protein is Multiple epidermal growth factor-like domains protein 8 (Megf8) of Rattus norvegicus (Rat).